Reading from the N-terminus, the 280-residue chain is Bis(5'-nucleosyl)-tetraphosphatase, symmetrical (280 aa).

The protein belongs to the Ap4A hydrolase family.

It catalyses the reaction P(1),P(4)-bis(5'-adenosyl) tetraphosphate + H2O = 2 ADP + 2 H(+). Its function is as follows. Hydrolyzes diadenosine 5',5'''-P1,P4-tetraphosphate to yield ADP. The protein is Bis(5'-nucleosyl)-tetraphosphatase, symmetrical of Shigella boydii serotype 18 (strain CDC 3083-94 / BS512).